The primary structure comprises 162 residues: Cytochrome c-type biogenesis protein CcmE (162 aa).

Topologically, residues 1–13 (MSFWPQSRKARRR) are cytoplasmic. Residues 14–34 (LTILLAIAPVLALAVGLALYG) form a helical; Signal-anchor for type II membrane protein membrane-spanning segment. Residues 35 to 162 (LRDSISLFYT…DAPAYGSQKP (128 aa)) lie on the Periplasmic side of the membrane. Heme-binding residues include histidine 128 and tyrosine 132. Residues 140-151 (ALKEQGEWRGEG) are compositionally biased toward basic and acidic residues. The disordered stretch occupies residues 140-162 (ALKEQGEWRGEGADAPAYGSQKP).

The protein belongs to the CcmE/CycJ family.

Its subcellular location is the cell inner membrane. Functionally, heme chaperone required for the biogenesis of c-type cytochromes. Transiently binds heme delivered by CcmC and transfers the heme to apo-cytochromes in a process facilitated by CcmF and CcmH. The polypeptide is Cytochrome c-type biogenesis protein CcmE (Caulobacter vibrioides (strain ATCC 19089 / CIP 103742 / CB 15) (Caulobacter crescentus)).